The chain runs to 474 residues: MNFETTIGLEVHVELKTNSKIFSPSPVNFGAAPNANTNVIDWGYPGVLPSINKGVVRDGIMAALALHAEVTKKMHFDRKNYFYPDNPKAYQITQSETPIAHDGWVEIEVDGKKKKIGIKEMHIEEDAGKNTHTGSYSYVDLNRQGTPLIEIVSKADIASPEEAVAYLEALRQRIQFTGISDVKMEEGSMRVDTNISVRPYGSDQYGTKTEMKNINSFNFVKNALNFEADRHQKVLMAGGEIVQETRRYDEATKGTVAMRTKEGSDDYRYFPEPDLPPLEVDDAWIEEIRSQMPEMPGERRRRYVNDLGLTDYDAMVLTQTKEMADFFEEAVKDGGDAKKVANYLMNDVNSYLNNQHVDLDDTKLTPANLAGMIKLIDDGTISSKMAKKVFQGILDGQEPAAFAKANGLVQLSDPAELQPIIDAILDDNEQSIEDFKNGKDRAFGFLIGQIMKKTQGKANPKVVNQLLGKSLNER.

This sequence belongs to the GatB/GatE family. GatB subfamily. As to quaternary structure, heterotrimer of A, B and C subunits.

It carries out the reaction L-glutamyl-tRNA(Gln) + L-glutamine + ATP + H2O = L-glutaminyl-tRNA(Gln) + L-glutamate + ADP + phosphate + H(+). The catalysed reaction is L-aspartyl-tRNA(Asn) + L-glutamine + ATP + H2O = L-asparaginyl-tRNA(Asn) + L-glutamate + ADP + phosphate + 2 H(+). Its function is as follows. Allows the formation of correctly charged Asn-tRNA(Asn) or Gln-tRNA(Gln) through the transamidation of misacylated Asp-tRNA(Asn) or Glu-tRNA(Gln) in organisms which lack either or both of asparaginyl-tRNA or glutaminyl-tRNA synthetases. The reaction takes place in the presence of glutamine and ATP through an activated phospho-Asp-tRNA(Asn) or phospho-Glu-tRNA(Gln). The chain is Aspartyl/glutamyl-tRNA(Asn/Gln) amidotransferase subunit B from Limosilactobacillus fermentum (strain NBRC 3956 / LMG 18251) (Lactobacillus fermentum).